We begin with the raw amino-acid sequence, 531 residues long: 2-isopropylmalate synthase (531 aa).

The Pyruvate carboxyltransferase domain occupies 8–284 (IIIFDTTLRD…LTNIDTKQIY (277 aa)). Mn(2+) is bound by residues Asp-17, His-208, His-210, and Asn-244. Residues 408-531 (RVELVQVSCG…TQDKQTEVTA (124 aa)) form a regulatory domain region.

It belongs to the alpha-IPM synthase/homocitrate synthase family. LeuA type 1 subfamily. In terms of assembly, homodimer. Mn(2+) serves as cofactor.

The protein resides in the cytoplasm. It carries out the reaction 3-methyl-2-oxobutanoate + acetyl-CoA + H2O = (2S)-2-isopropylmalate + CoA + H(+). The protein operates within amino-acid biosynthesis; L-leucine biosynthesis; L-leucine from 3-methyl-2-oxobutanoate: step 1/4. Functionally, catalyzes the condensation of the acetyl group of acetyl-CoA with 3-methyl-2-oxobutanoate (2-ketoisovalerate) to form 3-carboxy-3-hydroxy-4-methylpentanoate (2-isopropylmalate). This chain is 2-isopropylmalate synthase, found in Nostoc sp. (strain PCC 7120 / SAG 25.82 / UTEX 2576).